The chain runs to 442 residues: Lysosomal dipeptide transporter MFSD1 (442 aa).

The short motif at 8–9 (LL) is the Dileucine internalization motif element. The next 10 membrane-spanning stretches (helical) occupy residues 38-58 (LLVL…YDNP), 85-105 (TVIF…GALV), 107-127 (AFWL…SLAV), 187-207 (LLIG…LAYL), 238-258 (LWLI…FIGL), 276-296 (AINS…GILV), 303-323 (IIWV…LAFT), 333-353 (LLGV…AFVV), 364-384 (FMQS…GMIL), and 390-410 (LFLE…VVML).

Belongs to the major facilitator superfamily. Homodimer. Interacts with lysosomal protein GLMP (via lumenal domain); the interaction starts while both proteins are still in the endoplasmic reticulum and is required for stabilization of MFSD1 in lysosomes but has no direct effect on its targeting to lysosomes or transporter activity.

It localises to the lysosome membrane. It carries out the reaction L-alpha-aminoacyl-L-arginine(out) = L-alpha-aminoacyl-L-arginine(in). It catalyses the reaction L-arginyl-L-alpha-amino acid(out) = L-arginyl-L-alpha-amino acid(in). The enzyme catalyses L-arginyl-glycine(out) = L-arginyl-glycine(in). The catalysed reaction is L-alpha-aminoacyl-L-lysine(out) = L-alpha-aminoacyl-L-lysine(in). It carries out the reaction L-aspartyl-L-lysine(out) = L-aspartyl-L-lysine(in). It catalyses the reaction L-alanyl-L-lysine(out) = L-alanyl-L-lysine(in). The enzyme catalyses L-lysyl-L-alpha-amino acid(out) = L-lysyl-L-alpha-amino acid(in). The catalysed reaction is L-lysyl-L-alanine(out) = L-lysyl-L-alanine(in). It carries out the reaction L-lysyl-L-lysine(out) = L-lysyl-L-lysine(in). It catalyses the reaction L-lysyl-glycine(out) = L-lysyl-glycine(in). The enzyme catalyses L-alpha-aminoacyl-L-histidine(out) = L-alpha-aminoacyl-L-histidine(in). The catalysed reaction is L-histidyl-L-alpha-amino acid(out) = L-histidyl-L-alpha-amino acid(in). It carries out the reaction L-histidyl-glycine(out) = L-histidyl-glycine(in). Functionally, lysosomal dipeptide uniporter that selectively exports lysine, arginine or histidine-containing dipeptides with a net positive charge from the lysosome lumen into the cytosol. Could play a role in a specific type of protein O-glycosylation indirectly regulating macrophages migration and tissue invasion. Also essential for liver homeostasis. In Gallus gallus (Chicken), this protein is Lysosomal dipeptide transporter MFSD1.